Here is a 215-residue protein sequence, read N- to C-terminus: Cytochrome b6 (215 aa).

A helical transmembrane segment spans residues 32-52 (IFYCLGGITLTCFLVQVATGF). Heme c is bound at residue Cys-35. 2 residues coordinate heme b: His-86 and His-100. Helical transmembrane passes span 90-110 (ASMM…TGGF), 116-136 (LTWV…VTGY), and 186-206 (LHTF…FLMI). His-187 and His-202 together coordinate heme b.

Belongs to the cytochrome b family. PetB subfamily. The 4 large subunits of the cytochrome b6-f complex are cytochrome b6, subunit IV (17 kDa polypeptide, PetD), cytochrome f and the Rieske protein, while the 4 small subunits are PetG, PetL, PetM and PetN. The complex functions as a dimer. The cofactor is heme b. It depends on heme c as a cofactor.

The protein resides in the plastid. It localises to the chloroplast thylakoid membrane. Functionally, component of the cytochrome b6-f complex, which mediates electron transfer between photosystem II (PSII) and photosystem I (PSI), cyclic electron flow around PSI, and state transitions. The polypeptide is Cytochrome b6 (Marchantia polymorpha (Common liverwort)).